The primary structure comprises 213 residues: ABA-inducible protein PHV A1 (213 aa).

Disordered stretches follow at residues Met-1–Thr-158 and Asn-182–His-213. The segment covering Gly-13–Thr-23 has biased composition (basic and acidic residues). LEA 11-mer repeat repeat units lie at residues Met-27 to Thr-37, Thr-38 to Thr-48, Ala-49 to Thr-59, Ala-60 to Ala-70, Ala-78 to Thr-88, Ala-89 to Gly-99, Thr-111 to Thr-121, Thr-122 to Ala-132, and Thr-133 to Thr-143. The tract at residues Met-27–Thr-143 is 11 X 11 AA tandem repeats of T-E-A-A-K-Q-K-A-A-E-T. 3 stretches are compositionally biased toward basic and acidic residues: residues Thr-41–Thr-74, Ala-81–Gln-98, and Glu-109–Ala-140. Residues Ala-193 to His-213 are compositionally biased toward low complexity.

The protein belongs to the LEA type 4 family.

This is ABA-inducible protein PHV A1 (HVA1) from Hordeum vulgare (Barley).